Here is a 305-residue protein sequence, read N- to C-terminus: MMSNENFDNDYNLPPPNDSAEDLKIFIERYERSVDSTLLEIDENKREALEKNILRKDRKMKYEIECNERLQGWKKLAIEREISEEQSGEVQFPRWIDEWANTKLGGIFERIFSKMDSMQNDMNSRFDAMQNEMTSMKGEMAEMKVEMVEMKRETIRLNTRIDLLEQKTEARFQSIEQRFNSIDQRFDSMEQRLDSMDQKMETIDARSCRSIMLTRKLENATRSDQGYLASPVPFLNGNEPVSSGLPPIERVEDIDELSKEQCVQYLKGYGITFSPAETIKLKKRLRDTVGLWSKASTEYEFHQFH.

Coiled-coil stretches lie at residues 27–63 (IERY…MKYE) and 120–207 (NDMN…DARS).

It belongs to the UPF0612 family.

The chain is UPF0612 protein C337.02c from Schizosaccharomyces pombe (strain 972 / ATCC 24843) (Fission yeast).